Reading from the N-terminus, the 318-residue chain is Phosphatidylglycerol--prolipoprotein diacylglyceryl transferase (318 aa).

The next 7 helical transmembrane spans lie at 23–43 (PLTI…GAWL), 59–79 (MDII…YHVI), 98–118 (IWEG…GAAI), 124–146 (GVRL…AMGR), 192–212 (FQPT…LLVF), 219–239 (LGAG…RFIF), and 253–273 (LRVN…VFLI). Residue arginine 146 participates in a 1,2-diacyl-sn-glycero-3-phospho-(1'-sn-glycerol) binding. Positions 293-312 (FDTRANGHDPEKHDETDGKG) are enriched in basic and acidic residues. The disordered stretch occupies residues 293–318 (FDTRANGHDPEKHDETDGKGNRHHVP).

Belongs to the Lgt family.

The protein resides in the cell membrane. It carries out the reaction L-cysteinyl-[prolipoprotein] + a 1,2-diacyl-sn-glycero-3-phospho-(1'-sn-glycerol) = an S-1,2-diacyl-sn-glyceryl-L-cysteinyl-[prolipoprotein] + sn-glycerol 1-phosphate + H(+). It participates in protein modification; lipoprotein biosynthesis (diacylglyceryl transfer). Catalyzes the transfer of the diacylglyceryl group from phosphatidylglycerol to the sulfhydryl group of the N-terminal cysteine of a prolipoprotein, the first step in the formation of mature lipoproteins. The sequence is that of Phosphatidylglycerol--prolipoprotein diacylglyceryl transferase from Paenarthrobacter aurescens (strain TC1).